A 483-amino-acid polypeptide reads, in one-letter code: Aspartyl/glutamyl-tRNA(Asn/Gln) amidotransferase subunit B (483 aa).

This sequence belongs to the GatB/GatE family. GatB subfamily. Heterotrimer of A, B and C subunits.

It carries out the reaction L-glutamyl-tRNA(Gln) + L-glutamine + ATP + H2O = L-glutaminyl-tRNA(Gln) + L-glutamate + ADP + phosphate + H(+). The enzyme catalyses L-aspartyl-tRNA(Asn) + L-glutamine + ATP + H2O = L-asparaginyl-tRNA(Asn) + L-glutamate + ADP + phosphate + 2 H(+). Functionally, allows the formation of correctly charged Asn-tRNA(Asn) or Gln-tRNA(Gln) through the transamidation of misacylated Asp-tRNA(Asn) or Glu-tRNA(Gln) in organisms which lack either or both of asparaginyl-tRNA or glutaminyl-tRNA synthetases. The reaction takes place in the presence of glutamine and ATP through an activated phospho-Asp-tRNA(Asn) or phospho-Glu-tRNA(Gln). This chain is Aspartyl/glutamyl-tRNA(Asn/Gln) amidotransferase subunit B, found in Lachnospira eligens (strain ATCC 27750 / DSM 3376 / VPI C15-48 / C15-B4) (Eubacterium eligens).